A 777-amino-acid polypeptide reads, in one-letter code: Dynamin-like protein ARC5 (777 aa).

Positions 45-343 constitute a Dynamin-type G domain; it reads PFEAPAVLVV…LWKRYKESVP (299 aa). A G1 motif region spans residues 55-62; that stretch reads GQQTDGKS. 55–62 is a binding site for GTP; the sequence is GQQTDGKS. The tract at residues 81 to 83 is G2 motif; it reads KTR. The G3 motif stretch occupies residues 160–163; it reads DTPG. GTP-binding positions include 160-164 and 231-234; these read DTPGL and TKLD. Residues 231–234 form a G4 motif region; the sequence is TKLD. The tract at residues 265–268 is G5 motif; that stretch reads SPFF. 2 coiled-coil regions span residues 300–320 and 728–765; these read EDIA…EKSR and NLRQ…NSHE.

The protein belongs to the TRAFAC class dynamin-like GTPase superfamily. Dynamin/Fzo/YdjA family. In terms of assembly, forms a homodimer and heterodimers with DRP3A and DRP3B on peroxisomes. Also interacts with FIS1A (but not FIS1B) and PEX11 proteins (PEX11A, PEX11B, PEX11C, PEX11D and PEX11E) on peroxisomes. Interacts with PDV1 and PDV2. In terms of processing, stabilized at the plastid outer envelope membranes (OEMs) in the constriction site when in complex with GTP, but destabilized after conversion of GTP into GDP leading to turnover with a cytosolic pool.

The protein resides in the cytoplasm. The protein localises to the plastid. It localises to the chloroplast outer membrane. Its subcellular location is the peroxisome. It is found in the cytosol. It carries out the reaction GTP + H2O = GDP + phosphate + H(+). Its activity is regulated as follows. GTPase activity is repressed by PDV2 thus increasing stability at the plastid outer envelope membranes (OEMs) periphery. Its function is as follows. Mechanochemical GTPase component of both plastid and peroxisome division machinery. Required for the last steps of plastid division specifically in mesophyll-cell, when the narrow isthmus breaks, facilitating the separation of the daughter plastids. Necessary for peroxisome activities. Seems to influence stromule (stroma-filled tubular extensions of the plastid envelope membrane) length and frequency. The sequence is that of Dynamin-like protein ARC5 from Arabidopsis thaliana (Mouse-ear cress).